The sequence spans 248 residues: Eukaryotic translation initiation factor 6 (248 aa).

This sequence belongs to the eIF-6 family. As to quaternary structure, monomer. Associates with the 60S ribosomal subunit.

It localises to the cytoplasm. Its subcellular location is the nucleus. The protein resides in the nucleolus. Functionally, binds to the 60S ribosomal subunit and prevents its association with the 40S ribosomal subunit to form the 80S initiation complex in the cytoplasm. May also be involved in ribosome biogenesis. In Trypanosoma cruzi (strain CL Brener), this protein is Eukaryotic translation initiation factor 6.